The chain runs to 113 residues: Iron-sulfur cluster insertion protein ErpA (113 aa).

Residues Cys-41, Cys-105, and Cys-107 each coordinate iron-sulfur cluster.

The protein belongs to the HesB/IscA family. As to quaternary structure, homodimer. The cofactor is iron-sulfur cluster.

Functionally, required for insertion of 4Fe-4S clusters for at least IspG. The chain is Iron-sulfur cluster insertion protein ErpA from Aliivibrio salmonicida (strain LFI1238) (Vibrio salmonicida (strain LFI1238)).